A 282-amino-acid polypeptide reads, in one-letter code: Transmembrane protein 41B (282 aa).

Positions 1-36 are disordered; the sequence is MAKKRAGNRETESSPLVEQEPRPSKETPVPKGAQSP. Transmembrane regions (helical) follow at residues 43–63, 102–122, 138–160, 188–208, 216–236, and 251–271; these read MSIL…YLVF, TQVL…AIPG, LALF…LSYL, LINY…FINI, PLGV…FVAI, and AVSW…ILPV. A VTT domain; required for its function in autophagy region spans residues 131–242; sequence GYLYPFPLAL…FVAINAGTTL (112 aa).

It belongs to the TMEM41 family.

It localises to the endoplasmic reticulum membrane. The protein resides in the endomembrane system. The catalysed reaction is a 1,2-diacyl-sn-glycero-3-phospho-L-serine(in) = a 1,2-diacyl-sn-glycero-3-phospho-L-serine(out). The enzyme catalyses cholesterol(in) = cholesterol(out). It catalyses the reaction a 1,2-diacyl-sn-glycero-3-phosphocholine(in) = a 1,2-diacyl-sn-glycero-3-phosphocholine(out). It carries out the reaction a 1,2-diacyl-sn-glycero-3-phosphoethanolamine(in) = a 1,2-diacyl-sn-glycero-3-phosphoethanolamine(out). Phospholipid scramblase involved in lipid homeostasis and membrane dynamics processes. Has phospholipid scramblase activity toward cholesterol and phosphatidylserine, as well as phosphatidylethanolamine and phosphatidylcholine. Required for autophagosome formation: participates in early stages of autophagosome biogenesis at the endoplasmic reticulum (ER) membrane by reequilibrating the leaflets of the ER as lipids are extracted by atg2 (atg2a or atg2b) to mediate autophagosome assembly. In addition to autophagy, involved in other processes in which phospholipid scramblase activity is required. Required for normal motor neuron development. The polypeptide is Transmembrane protein 41B (Danio rerio (Zebrafish)).